We begin with the raw amino-acid sequence, 466 residues long: MNNSTNSSNNGLAITSPYKTFEVVFIVLVAGSLSLVTIIGNILVMVSIKVNRHLQTVNNYFLFSLACADLIIGVFSMNLYTLYTVIGYWPLGPVVCDLWLALDYVVSNASVMNLLIISFDRYFCVTKPLTYPVKRTTKMAGMMIAAAWVLSFILWAPAILFWQFIVGVRTVEDGECYIQFFSNAAVTFGTAIAAFYLPVIIMTVLYWHISRASKSRIKKEKKEPVANQDPVSPSLVQGRIVKPNNNNMPGGDGGLEHNKIQNGKAPRDGGTENCVQGEEKESSNDSTSVSAVASNMRDDEITQDENTVSTSLGHSKDDNSRQTCIKIVTKTQKGDACTPTSTTVELVGSSGQNGDEKQNIVARKIVKMTKQPAKKKPPPSREKKVTRTILAILLAFIITWAPYNVMVLINTFCAPCIPNTVWTIGYWLCYINSTINPACYALCNATFKKTFKHLLMCHYKNIGATR.

Residues 1–22 are Extracellular-facing; that stretch reads MNNSTNSSNNGLAITSPYKTFE. N-linked (GlcNAc...) asparagine glycans are attached at residues asparagine 2, asparagine 3, and asparagine 6. A helical transmembrane segment spans residues 23–45; sequence VVFIVLVAGSLSLVTIIGNILVM. The Cytoplasmic segment spans residues 46–59; sequence VSIKVNRHLQTVNN. Residues 60–80 form a helical membrane-spanning segment; the sequence is YFLFSLACADLIIGVFSMNLY. The Extracellular segment spans residues 81-97; that stretch reads TLYTVIGYWPLGPVVCD. Residues cysteine 96 and cysteine 176 are joined by a disulfide bond. Residues 98 to 119 form a helical membrane-spanning segment; it reads LWLALDYVVSNASVMNLLIISF. The Important for signaling motif lies at 120–122; the sequence is DRY. Over 120 to 139 the chain is Cytoplasmic; sequence DRYFCVTKPLTYPVKRTTKM. Residues 140 to 162 form a helical membrane-spanning segment; sequence AGMMIAAAWVLSFILWAPAILFW. The Extracellular portion of the chain corresponds to 163–184; it reads QFIVGVRTVEDGECYIQFFSNA. A helical membrane pass occupies residues 185 to 209; it reads AVTFGTAIAAFYLPVIIMTVLYWHI. Residues 210-387 lie on the Cytoplasmic side of the membrane; it reads SRASKSRIKK…PPSREKKVTR (178 aa). The segment at 218-320 is disordered; it reads KKEKKEPVAN…SLGHSKDDNS (103 aa). At serine 232 the chain carries Phosphoserine. The span at 254 to 270 shows a compositional bias: basic and acidic residues; it reads GLEHNKIQNGKAPRDGG. Composition is skewed to polar residues over residues 284-293 and 304-313; these read NDSTSVSAVA and DENTVSTSLG. The helical transmembrane segment at 388–410 threads the bilayer; it reads TILAILLAFIITWAPYNVMVLIN. Residues 411–418 lie on the Extracellular side of the membrane; the sequence is TFCAPCIP. A disulfide bridge links cysteine 413 with cysteine 416. Residues 419-442 form a helical membrane-spanning segment; the sequence is NTVWTIGYWLCYINSTINPACYAL. Positions 436 to 440 match the Important for signaling motif; the sequence is NPACY. Residues 443–466 lie on the Cytoplasmic side of the membrane; sequence CNATFKKTFKHLLMCHYKNIGATR. Threonine 446, threonine 450, and threonine 465 each carry phosphothreonine.

Belongs to the G-protein coupled receptor 1 family. Muscarinic acetylcholine receptor subfamily. CHRM2 sub-subfamily. As to quaternary structure, interacts with ARRB1 and ARRB2. Interacts with RACK1; the interaction regulates CHRM2 internalization. Phosphorylated in response to agonist treatment.

It is found in the cell membrane. It localises to the postsynaptic cell membrane. In terms of biological role, the muscarinic acetylcholine receptor mediates various cellular responses, including inhibition of adenylate cyclase, breakdown of phosphoinositides and modulation of potassium channels through the action of G proteins. Primary transducing effect is adenylate cyclase inhibition. Signaling promotes phospholipase C activity, leading to the release of inositol trisphosphate (IP3); this then triggers calcium ion release into the cytosol. This is Muscarinic acetylcholine receptor M2 (Chrm2) from Mus musculus (Mouse).